The chain runs to 114 residues: Hemerythrin subunit 2 (114 aa).

Positions 26, 55, 59, 74, 78, 102, and 107 each coordinate Fe cation.

It belongs to the hemerythrin family.

Hemerythrin is a respiratory protein in blood cells of certain marine worms. The oxygen-binding site in each chain contains two iron atoms. The sequence is that of Hemerythrin subunit 2 from Golfingia vulgaris (Marine worm).